The chain runs to 338 residues: Tetraacyldisaccharide 4'-kinase (338 aa).

Position 61–68 (61–68) interacts with ATP; that stretch reads TLGGTGKT.

This sequence belongs to the LpxK family.

It carries out the reaction a lipid A disaccharide + ATP = a lipid IVA + ADP + H(+). Its pathway is glycolipid biosynthesis; lipid IV(A) biosynthesis; lipid IV(A) from (3R)-3-hydroxytetradecanoyl-[acyl-carrier-protein] and UDP-N-acetyl-alpha-D-glucosamine: step 6/6. Functionally, transfers the gamma-phosphate of ATP to the 4'-position of a tetraacyldisaccharide 1-phosphate intermediate (termed DS-1-P) to form tetraacyldisaccharide 1,4'-bis-phosphate (lipid IVA). The protein is Tetraacyldisaccharide 4'-kinase of Nitrosococcus oceani (strain ATCC 19707 / BCRC 17464 / JCM 30415 / NCIMB 11848 / C-107).